The sequence spans 134 residues: Profilin-5 (134 aa).

Belongs to the profilin family. Occurs in many kinds of cells as a complex with monomeric actin in a 1:1 ratio. As to expression, specifically expressed in mature pollen grains. Expressed in germinating pollen grains. Expressed in growing pollen tubes (at protein level).

The protein localises to the cytoplasm. It localises to the cytoskeleton. Functionally, binds to actin monomers and regulates the organization of the actin cytoskeleton. At high concentrations, profilin prevents the polymerization of actin, whereas it enhances it at low concentrations. At low concentrations, associates with the poly-proline motif of formins to enhance actin filament elongation rate. Acts redundantly with PRF4 to regulate apical actin polymerization at the tip of pollen tube and control polarized pollen tube growth. Functions probably by favoring formin-mediated actin polymerization at pollen tube tips. The chain is Profilin-5 from Arabidopsis thaliana (Mouse-ear cress).